The sequence spans 272 residues: Adenylate kinase (272 aa).

55 to 60 (GAGKGT) is a binding site for ATP. The interval 75–104 (ATGDMLRSQVAKKTPLGKEAKKIMDQGGLV) is NMP. AMP-binding positions include Thr-76, Arg-81, 102–104 (GLV), 131–134 (GFPR), and Gln-138. Residues 172–209 (GRLVHPASGRSYHKIFNPPKQDMKDDITGEPLIQRSDD) are LID. ATP contacts are provided by residues Arg-173 and 182-183 (SY). Arg-206 and Arg-217 together coordinate AMP. ATP is bound at residue Gln-245.

This sequence belongs to the adenylate kinase family. AK2 subfamily. In terms of assembly, monomer.

The protein resides in the cytoplasm. It localises to the cytosol. It is found in the mitochondrion intermembrane space. The catalysed reaction is AMP + ATP = 2 ADP. Functionally, catalyzes the reversible transfer of the terminal phosphate group between ATP and AMP. Plays an important role in cellular energy homeostasis and in adenine nucleotide metabolism. Adenylate kinase activity is critical for regulation of the phosphate utilization and the AMP de novo biosynthesis pathways. In Talaromyces marneffei (Penicillium marneffei), this protein is Adenylate kinase (adk1).